A 477-amino-acid polypeptide reads, in one-letter code: MLKVYNTLTKQKEEFKPLREGEVKMYVCGPTVYDYPHLGHARTYIAFDVIRRYLEHKGYTVLMVMNFTDIDDKIIKRARETGEDPKELAERFIKIFLEDMEALKVKPADIYPRVTDHIDDIIEFIGKLKEKGYAYEGSDGIYFEVKKFPEYGKLSGVKIEDLQKGARVEPGEGKKNPEDFALWKKAKPGEPKWDSPWGEGRPGWHIECSVMSSKYLGESFDIHGGGNDLIFPHHENEIAQSEACFGHEWVKYWLHTGFVMVKGEKMSKSLGNFVTIRELLKRYEPEVIRFFVLQKHYRSPLEYTEEGLQHAKNNLQRLYNTLENIRVALRNAEISYTWGELEFKTYEIIREGKRKFYEAMDDDFNTAEALKAVFEVANAINKYLTEANKPKESILRKALEFFKIVSEVFGVFEDYFREETKEREESEKLIELLVEVRKQLRKEKRYELADMIREELKKLGIQLEDRGSETTWKRIIT.

Cys-28 provides a ligand contact to Zn(2+). A 'HIGH' region motif is present at residues 30-40 (PTVYDYPHLGH). Residues Cys-208, His-233, and Glu-237 each contribute to the Zn(2+) site. The 'KMSKS' region motif lies at 265-269 (KMSKS). Lys-268 contributes to the ATP binding site.

Belongs to the class-I aminoacyl-tRNA synthetase family. Requires Zn(2+) as cofactor.

The protein localises to the cytoplasm. The catalysed reaction is tRNA(Cys) + L-cysteine + ATP = L-cysteinyl-tRNA(Cys) + AMP + diphosphate. The sequence is that of Cysteine--tRNA ligase from Pyrococcus furiosus (strain ATCC 43587 / DSM 3638 / JCM 8422 / Vc1).